Here is a 31-residue protein sequence, read N- to C-terminus: Photosystem II reaction center protein T (31 aa).

Residues 3-23 (SFAYVLILTLAIATLFFAIAF) traverse the membrane as a helical segment.

Belongs to the PsbT family. As to quaternary structure, PSII is composed of 1 copy each of membrane proteins PsbA, PsbB, PsbC, PsbD, PsbE, PsbF, PsbH, PsbI, PsbJ, PsbK, PsbL, PsbM, PsbT, PsbX, PsbY, PsbZ, Psb30/Ycf12, peripheral proteins PsbO, CyanoQ (PsbQ), PsbU, PsbV and a large number of cofactors. It forms dimeric complexes.

It is found in the cellular thylakoid membrane. In terms of biological role, found at the monomer-monomer interface of the photosystem II (PS II) dimer, plays a role in assembly and dimerization of PSII. PSII is a light-driven water plastoquinone oxidoreductase, using light energy to abstract electrons from H(2)O, generating a proton gradient subsequently used for ATP formation. The chain is Photosystem II reaction center protein T from Parasynechococcus marenigrum (strain WH8102).